The following is a 991-amino-acid chain: Collagenase ColT (991 aa).

The first 28 residues, M1–A28, serve as a signal peptide directing secretion. The propeptide occupies F29–P52. Positions Y53–L727 are S1 metalloprotease domain, degrades FALGPA (furylacryloyl-Leu-Gly-Pro-Ala). Positions Y57–N330 are activator domain. Residues D340 to N611 are catalytic subdomain. E440 is a binding site for Ca(2+). H465 contributes to the Zn(2+) binding site. E466 is an active-site residue. H469 is a Zn(2+) binding site. Residues G473, I477, and G479 each contribute to the Ca(2+) site. Residue E499 participates in Zn(2+) binding. The helper subdomain stretch occupies residues D619 to K731. Collagen-binding domain regions lie at residues I755–D870 and I878–N991. The Ca(2+) site is built by E757, E759, N761, D784, D787, E883, E885, N887, D888, D910, and D913.

It belongs to the peptidase M9B family. Collagenase subfamily. It depends on Ca(2+) as a cofactor. Zn(2+) is required as a cofactor.

The protein localises to the secreted. The catalysed reaction is Digestion of native collagen in the triple helical region at Xaa-|-Gly bonds. With synthetic peptides, a preference is shown for Gly at P3 and P1', Pro and Ala at P2 and P2', and hydroxyproline, Ala or Arg at P3'.. Its activity is regulated as follows. Partially inhibited by 1-10-phenanthroline; inactivation is irreversible. Partially inhibited by EDTA; inactivation is reversible. Inhibited by broad-spectrum zinc metalloprotease inhibitor batimastat. N-aryl mercaptoacetamide-based inhibitors have been isolated that act on clostridial collagenases with submicromolar affinity while having negligibile activity on human collagenases. Its function is as follows. Clostridial collagenases are among the most efficient degraders of eukaryotic collagen known; saprophytes use collagen as a carbon source while pathogens additionally digest collagen to aid in host colonization. Has both tripeptidylcarboxypeptidase on Gly-X-Y and endopeptidase activities; the endopeptidase cuts within the triple helix region of collagen while tripeptidylcarboxypeptidase successively digests the exposed ends, thus clostridial collagenases can digest large sections of collagen. The activator domain (residues 57-330) and catalytic subdomain (340-611) open and close around substrate allowing digestion when the protein is closed. The protein is Collagenase ColT of Clostridium tetani (strain Massachusetts / E88).